We begin with the raw amino-acid sequence, 299 residues long: 4-hydroxy-tetrahydrodipicolinate synthase (299 aa).

Thr-51 contributes to the pyruvate binding site. Tyr-139 acts as the Proton donor/acceptor in catalysis. Residue Lys-167 is the Schiff-base intermediate with substrate of the active site. Position 209 (Ile-209) interacts with pyruvate.

This sequence belongs to the DapA family. In terms of assembly, homotetramer; dimer of dimers.

The protein localises to the cytoplasm. It catalyses the reaction L-aspartate 4-semialdehyde + pyruvate = (2S,4S)-4-hydroxy-2,3,4,5-tetrahydrodipicolinate + H2O + H(+). It functions in the pathway amino-acid biosynthesis; L-lysine biosynthesis via DAP pathway; (S)-tetrahydrodipicolinate from L-aspartate: step 3/4. In terms of biological role, catalyzes the condensation of (S)-aspartate-beta-semialdehyde [(S)-ASA] and pyruvate to 4-hydroxy-tetrahydrodipicolinate (HTPA). In Methylobacterium radiotolerans (strain ATCC 27329 / DSM 1819 / JCM 2831 / NBRC 15690 / NCIMB 10815 / 0-1), this protein is 4-hydroxy-tetrahydrodipicolinate synthase.